Here is a 364-residue protein sequence, read N- to C-terminus: Anthranilate phosphoribosyltransferase 1 (364 aa).

5-phospho-alpha-D-ribose 1-diphosphate contacts are provided by residues G102, 105-106, T110, 112-115, 130-138, and S142; these read GD, NIST, and KHGNRSASS. G102 is an anthranilate binding site. Position 114 (S114) interacts with Mg(2+). N133 lines the anthranilate pocket. R188 contributes to the anthranilate binding site. Mg(2+) contacts are provided by D247 and E248.

It belongs to the anthranilate phosphoribosyltransferase family. Homodimer. Requires Mg(2+) as cofactor.

The enzyme catalyses N-(5-phospho-beta-D-ribosyl)anthranilate + diphosphate = 5-phospho-alpha-D-ribose 1-diphosphate + anthranilate. Its pathway is amino-acid biosynthesis; L-tryptophan biosynthesis; L-tryptophan from chorismate: step 2/5. In terms of biological role, catalyzes the transfer of the phosphoribosyl group of 5-phosphorylribose-1-pyrophosphate (PRPP) to anthranilate to yield N-(5'-phosphoribosyl)-anthranilate (PRA). The sequence is that of Anthranilate phosphoribosyltransferase 1 from Nostoc sp. (strain PCC 7120 / SAG 25.82 / UTEX 2576).